A 418-amino-acid polypeptide reads, in one-letter code: Pyruvate kinase isozyme G, chloroplastic (418 aa).

Positions 14 and 15 each coordinate K(+). Arg-21 is a binding site for ATP. Position 165 (Glu-165) interacts with Mg(2+). Substrate contacts are provided by Gly-188, Asp-189, and Thr-221. Asp-189 is a binding site for Mg(2+).

Belongs to the pyruvate kinase family. It depends on Mg(2+) as a cofactor. Requires K(+) as cofactor. As to expression, expressed in developing and germinating endosperm and in roots.

The protein resides in the plastid. The protein localises to the chloroplast. It carries out the reaction pyruvate + ATP = phosphoenolpyruvate + ADP + H(+). Its pathway is carbohydrate degradation; glycolysis; pyruvate from D-glyceraldehyde 3-phosphate: step 5/5. The chain is Pyruvate kinase isozyme G, chloroplastic from Ricinus communis (Castor bean).